An 83-amino-acid chain; its full sequence is Cell division topological specificity factor (83 aa).

It belongs to the MinE family.

In terms of biological role, prevents the cell division inhibition by proteins MinC and MinD at internal division sites while permitting inhibition at polar sites. This ensures cell division at the proper site by restricting the formation of a division septum at the midpoint of the long axis of the cell. The chain is Cell division topological specificity factor from Buchnera aphidicola subsp. Schizaphis graminum (strain Sg).